We begin with the raw amino-acid sequence, 342 residues long: Putative glycosyltransferases (342 aa).

Transmembrane regions (helical) follow at residues 227 to 247 and 262 to 282; these read IFYL…YLII and VIVS…LVGI.

Belongs to the glycosyltransferase 2 family.

The protein localises to the cell membrane. May play only a redundant role in maintaining cell wall viability and bacterial virulence. The chain is Putative glycosyltransferases (pimF) from Mycobacterium tuberculosis (strain CDC 1551 / Oshkosh).